Here is a 368-residue protein sequence, read N- to C-terminus: 4-hydroxy-3-methylbut-2-en-1-yl diphosphate synthase (flavodoxin) (368 aa).

The [4Fe-4S] cluster site is built by cysteine 271, cysteine 274, cysteine 306, and glutamate 313.

The protein belongs to the IspG family. It depends on [4Fe-4S] cluster as a cofactor.

It carries out the reaction (2E)-4-hydroxy-3-methylbut-2-enyl diphosphate + oxidized [flavodoxin] + H2O + 2 H(+) = 2-C-methyl-D-erythritol 2,4-cyclic diphosphate + reduced [flavodoxin]. It functions in the pathway isoprenoid biosynthesis; isopentenyl diphosphate biosynthesis via DXP pathway; isopentenyl diphosphate from 1-deoxy-D-xylulose 5-phosphate: step 5/6. Converts 2C-methyl-D-erythritol 2,4-cyclodiphosphate (ME-2,4cPP) into 1-hydroxy-2-methyl-2-(E)-butenyl 4-diphosphate. In Haemophilus influenzae (strain 86-028NP), this protein is 4-hydroxy-3-methylbut-2-en-1-yl diphosphate synthase (flavodoxin).